The following is a 444-amino-acid chain: Type I restriction enzyme EcoDI specificity subunit (444 aa).

This sequence belongs to the type-I restriction system S methylase family. As to quaternary structure, the type I restriction/modification system is composed of three polypeptides R, M and S; the restriction enzyme has stoichiometry R(2)M(2)S(1) while the methyltransferase is M(2)S(1).

Functionally, the specificity (S) subunit of a type I restriction enzyme; this subunit dictates DNA sequence specificity. The M and S subunits together form a methyltransferase (MTase) that methylates two adenine residues of the sequence 5'-TTAN(7)GTCY-3'. In the presence of the R subunit the complex can also act as an endonuclease, binding to the same target sequence but cutting the DNA some distance from this site. Whether the DNA is cut or modified depends on the methylation state of the target sequence. When the target site is unmodified, the DNA is cut. When the target site is hemimethylated, the complex acts as a maintenance MTase modifying the DNA so that both strands become methylated. After locating a non-methylated recognition site, the enzyme complex serves as a molecular motor that translocates DNA in an ATP-dependent manner until a collision occurs that triggers cleavage. In Escherichia coli, this protein is Type I restriction enzyme EcoDI specificity subunit.